A 214-amino-acid chain; its full sequence is Urease accessory protein UreE (214 aa).

Positions 163-214 are disordered; the sequence is NAEPSGVDHSHEATDSGHGYGEDHDHDHSHDHNHDHDHNHDHDHSHSHDSHE. A compositionally biased stretch (basic and acidic residues) spans 168–214; the sequence is GVDHSHEATDSGHGYGEDHDHDHSHDHNHDHDHNHDHDHSHSHDSHE.

This sequence belongs to the UreE family.

It localises to the cytoplasm. Involved in urease metallocenter assembly. Binds nickel. Probably functions as a nickel donor during metallocenter assembly. The sequence is that of Urease accessory protein UreE from Natronomonas pharaonis (strain ATCC 35678 / DSM 2160 / CIP 103997 / JCM 8858 / NBRC 14720 / NCIMB 2260 / Gabara) (Halobacterium pharaonis).